Consider the following 172-residue polypeptide: Immune protein Tsi1 (172 aa).

The signal sequence occupies residues 1 to 19 (MKLLAGSFAALFLSLSAQA). 3 disulfides stabilise this stretch: Cys-22/Cys-167, Cys-79/Cys-121, and Cys-147/Cys-155.

Forms a heterotetramer with Tse1 consisting of two Tse1 dimers and two Tsi1 dimers. Formation of the complex inactivates Tse1 enzymatic activity.

Immunity protein that plays a role in preventing early activation of toxin Tse1. Binds to a large surface of Tse1 and thereby occludes the active site to specifically inhibits enzyme activity by forming a hydrogen bond with the catalytic diad. The chain is Immune protein Tsi1 from Pseudomonas aeruginosa (strain ATCC 15692 / DSM 22644 / CIP 104116 / JCM 14847 / LMG 12228 / 1C / PRS 101 / PAO1).